The following is a 532-amino-acid chain: Tyrosine-protein kinase Src-1 (532 aa).

The segment at 1–52 is disordered; it reads MGATKSKPREGGPRSRSLDIVEGSHQPFTSLSASQTPNKSLDSHRPPAQPFG. The N-myristoyl glycine moiety is linked to residue glycine 2. Over residues 7 to 19 the composition is skewed to basic and acidic residues; sequence KPREGGPRSRSLD. A compositionally biased stretch (polar residues) spans 26-40; sequence QPFTSLSASQTPNKS. The SH3 domain occupies 80-141; that stretch reads GGVTTFVALY…PSNYVAPSDS (62 aa). The SH2 domain maps to 147-244; sequence WYLGKITRRE…GLCHRLTTVC (98 aa). In terms of domain architecture, Protein kinase spans 266 to 519; that stretch reads LRLELKLGQG…YLQAFLEDYF (254 aa). Residues 272-280 and lysine 294 each bind ATP; that span reads LGQGCFGEV. Aspartate 385 acts as the Proton acceptor in catalysis. Position 415 is a phosphotyrosine; by autocatalysis (tyrosine 415).

Belongs to the protein kinase superfamily. Tyr protein kinase family. SRC subfamily.

The protein localises to the cell membrane. The catalysed reaction is L-tyrosyl-[protein] + ATP = O-phospho-L-tyrosyl-[protein] + ADP + H(+). The chain is Tyrosine-protein kinase Src-1 (src-a) from Xenopus laevis (African clawed frog).